The chain runs to 284 residues: 2-dehydro-3-deoxyphosphooctonate aldolase (284 aa).

The protein belongs to the KdsA family.

The protein localises to the cytoplasm. The catalysed reaction is D-arabinose 5-phosphate + phosphoenolpyruvate + H2O = 3-deoxy-alpha-D-manno-2-octulosonate-8-phosphate + phosphate. The protein operates within carbohydrate biosynthesis; 3-deoxy-D-manno-octulosonate biosynthesis; 3-deoxy-D-manno-octulosonate from D-ribulose 5-phosphate: step 2/3. It participates in bacterial outer membrane biogenesis; lipopolysaccharide biosynthesis. This chain is 2-dehydro-3-deoxyphosphooctonate aldolase, found in Ralstonia pickettii (strain 12J).